The chain runs to 421 residues: Serine/threonine-protein kinase OXI1 (421 aa).

The 313-residue stretch at 17 to 329 folds into the Protein kinase domain; that stretch reads LEVLSLLGRG…VEEIKGHDFF (313 aa). ATP is bound by residues 23–31 and Lys45; that span reads LGRGAKGVV. Residue Asp149 is the Proton acceptor of the active site. Residues 167 to 246 are activation loop; that stretch reads DFDLSTNLAP…VGTEEYVAPE (80 aa). Residue Ser235 is modified to Phosphoserine; by PDPK1. An AGC-kinase C-terminal domain is found at 330–421; that stretch reads RGVDWEKVIL…LESDNNFLVF (92 aa). The PIF signature appears at 418–421; the sequence is FLVF.

The protein belongs to the protein kinase superfamily. AGC Ser/Thr protein kinase family. As to quaternary structure, interacts with PDK1 and PDK2. In terms of tissue distribution, expressed in roots and root hair cells.

The catalysed reaction is L-seryl-[protein] + ATP = O-phospho-L-seryl-[protein] + ADP + H(+). It catalyses the reaction L-threonyl-[protein] + ATP = O-phospho-L-threonyl-[protein] + ADP + H(+). Activated in response to hydrogen peroxide and cellulase elicitor. Activated by PDK1 in a phosphatidic acid dependent manner. Involved in oxidative burst-mediated signaling. Required for basal resistance to P.parasitica infection and root hair growth. Partly required for the activation of MPK3 and MPK6 by hydrogen peroxide and cellulase elicitor. This Arabidopsis thaliana (Mouse-ear cress) protein is Serine/threonine-protein kinase OXI1.